We begin with the raw amino-acid sequence, 254 residues long: Proteasome activator complex subunit 3 (254 aa).

Ala2 is subject to N-acetylalanine. Ser17 and Ser24 each carry phosphoserine. Lys195 carries the post-translational modification N6-acetyllysine; by P300/CBP. Position 247 is a phosphoserine; by CHEK2 (Ser247).

The protein belongs to the PA28 family. As to quaternary structure, homoheptamer; the stability of the heptamer is essential for the specific activation of the trypsine-like subunit and inhibition of the chymotrypsin-like and postglutamyl-preferring (PGPH) subunits of the proteasome. Interacts with p53/TP53 and MDM2. Interacts with MAP3K3. Associates with the proteasome. Interacts with CCAR2. Interacts with PSME3IP1 (via C-terminus); the interaction is direct and promotes the association of PSME3 with the 20S proteasome. Interacts with COIL; the interaction is inhibited by PSME3IP1. In terms of assembly, (Microbial infection) Interacts with human cytomegalovirus UL27. Post-translationally, phosphorylated by MAP3K3. Phosphorylation at Ser-247 promotes its association with CCAR2. In terms of processing, acetylation at the major site Lys-195 is important for oligomerization and ability to degrade its target substrates. Deacetylated by SIRT1.

The protein resides in the nucleus. The protein localises to the cytoplasm. Its function is as follows. Subunit of the 11S REG-gamma (also called PA28-gamma) proteasome regulator, a doughnut-shaped homoheptamer which associates with the proteasome. 11S REG-gamma activates the trypsin-like catalytic subunit of the proteasome but inhibits the chymotrypsin-like and postglutamyl-preferring (PGPH) subunits. Facilitates the MDM2-p53/TP53 interaction which promotes ubiquitination- and MDM2-dependent proteasomal degradation of p53/TP53, limiting its accumulation and resulting in inhibited apoptosis after DNA damage. May also be involved in cell cycle regulation. Mediates CCAR2 and CHEK2-dependent SIRT1 inhibition. This chain is Proteasome activator complex subunit 3 (PSME3), found in Homo sapiens (Human).